The following is a 394-amino-acid chain: Phosphoglycerate kinase (394 aa).

Substrate-binding positions include Asp21–Asn23, Arg36, His59–Arg62, Arg118, and Arg151. A Phosphoserine modification is found at Ser183. 2 residues coordinate ATP: Lys201 and Gly292. Thr299 is subject to Phosphothreonine. ATP is bound by residues Glu323 and Gly350–Ser353.

Belongs to the phosphoglycerate kinase family. In terms of assembly, monomer.

Its subcellular location is the cytoplasm. It catalyses the reaction (2R)-3-phosphoglycerate + ATP = (2R)-3-phospho-glyceroyl phosphate + ADP. The protein operates within carbohydrate degradation; glycolysis; pyruvate from D-glyceraldehyde 3-phosphate: step 2/5. This chain is Phosphoglycerate kinase, found in Bacillus mycoides (strain KBAB4) (Bacillus weihenstephanensis).